Here is a 175-residue protein sequence, read N- to C-terminus: Large ribosomal subunit protein uL5 (175 aa).

It belongs to the universal ribosomal protein uL5 family. As to quaternary structure, part of the 50S ribosomal subunit; contacts the 5S rRNA and probably tRNA. Forms a bridge to the 30S subunit in the 70S ribosome.

Functionally, this is one of the proteins that bind and probably mediate the attachment of the 5S RNA into the large ribosomal subunit, where it forms part of the central protuberance. In the 70S ribosome it contacts protein S13 of the 30S subunit (bridge B1b), connecting the 2 subunits; this bridge is implicated in subunit movement. May contact the P site tRNA; the 5S rRNA and some of its associated proteins might help stabilize positioning of ribosome-bound tRNAs. This is Large ribosomal subunit protein uL5 from Halobacterium salinarum (strain ATCC 29341 / DSM 671 / R1).